Here is a 691-residue protein sequence, read N- to C-terminus: Protein phosphatase Slingshot homolog (691 aa).

The 56-residue stretch at Glu236–Ala291 folds into the DEK-C domain. The 142-residue stretch at Arg295–Ala436 folds into the Tyrosine-protein phosphatase domain. Cys380 serves as the catalytic Phosphocysteine intermediate. The stretch at Asn532–Leu580 forms a coiled coil. The tract at residues Asn585 to Ser620 is disordered. The span at Ser587–Lys596 shows a compositional bias: basic and acidic residues. A compositionally biased stretch (polar residues) spans Glu597–Arg619.

It belongs to the protein-tyrosine phosphatase family. In terms of assembly, interacts with actin and this stimulates phosphatase activity.

The protein localises to the cytoplasm. The protein resides in the cytoskeleton. It localises to the cleavage furrow. It is found in the midbody. The enzyme catalyses O-phospho-L-tyrosyl-[protein] + H2O = L-tyrosyl-[protein] + phosphate. It carries out the reaction O-phospho-L-seryl-[protein] + H2O = L-seryl-[protein] + phosphate. The catalysed reaction is O-phospho-L-threonyl-[protein] + H2O = L-threonyl-[protein] + phosphate. Protein phosphatase which regulates actin filament dynamics. Dephosphorylates and activates the actin binding/depolymerizing factor cofilin, which subsequently binds to actin filaments and stimulates their disassembly. Required for completion of the gastrulation movement and for cytokinesis. The sequence is that of Protein phosphatase Slingshot homolog (ssh) from Xenopus laevis (African clawed frog).